Here is a 265-residue protein sequence, read N- to C-terminus: NAD kinase 2 (265 aa).

Asn-51 acts as the Proton acceptor in catalysis. Residues 122–123 (NE), Arg-149, Asp-151, 162–167 (TAYNKS), Ala-186, and Asn-226 each bind NAD(+).

It belongs to the NAD kinase family. It depends on a divalent metal cation as a cofactor.

The protein resides in the cytoplasm. The catalysed reaction is NAD(+) + ATP = ADP + NADP(+) + H(+). Functionally, involved in the regulation of the intracellular balance of NAD and NADP, and is a key enzyme in the biosynthesis of NADP. Catalyzes specifically the phosphorylation on 2'-hydroxyl of the adenosine moiety of NAD to yield NADP. In Halalkalibacterium halodurans (strain ATCC BAA-125 / DSM 18197 / FERM 7344 / JCM 9153 / C-125) (Bacillus halodurans), this protein is NAD kinase 2.